We begin with the raw amino-acid sequence, 104 residues long: Large ribosomal subunit protein uL24 (104 aa).

The protein belongs to the universal ribosomal protein uL24 family. As to quaternary structure, part of the 50S ribosomal subunit.

In terms of biological role, one of two assembly initiator proteins, it binds directly to the 5'-end of the 23S rRNA, where it nucleates assembly of the 50S subunit. Its function is as follows. One of the proteins that surrounds the polypeptide exit tunnel on the outside of the subunit. The polypeptide is Large ribosomal subunit protein uL24 (Pectobacterium atrosepticum (strain SCRI 1043 / ATCC BAA-672) (Erwinia carotovora subsp. atroseptica)).